The sequence spans 416 residues: Meiotically up-regulated protein PB1A10.08 (416 aa).

Its subcellular location is the cytoplasm. In terms of biological role, may have a role in meiosis and sporulation. The chain is Meiotically up-regulated protein PB1A10.08 from Schizosaccharomyces pombe (strain 972 / ATCC 24843) (Fission yeast).